The primary structure comprises 107 residues: Iron-sulfur cluster assembly protein CyaY (107 aa).

This sequence belongs to the frataxin family.

Its function is as follows. Involved in iron-sulfur (Fe-S) cluster assembly. May act as a regulator of Fe-S biogenesis. The polypeptide is Iron-sulfur cluster assembly protein CyaY (Enterobacter sp. (strain 638)).